We begin with the raw amino-acid sequence, 95 residues long: Integration host factor subunit beta (95 aa).

Belongs to the bacterial histone-like protein family. As to quaternary structure, heterodimer of an alpha and a beta chain.

Its function is as follows. This protein is one of the two subunits of integration host factor, a specific DNA-binding protein that functions in genetic recombination as well as in transcriptional and translational control. This chain is Integration host factor subunit beta, found in Paracoccus denitrificans (strain Pd 1222).